A 315-amino-acid polypeptide reads, in one-letter code: Calcium homeostasis modulator protein 6 (315 aa).

The Cytoplasmic segment spans residues 1-21 (MEKFKAVLDLQIKHRSALGYG). The chain crosses the membrane as a helical span at residues 22–37 (LVTLLTAGGEKIFSTV). Residues 38-46 (VFQCPCTAT) are Extracellular-facing. Intrachain disulfides connect cysteine 41–cysteine 127, cysteine 43–cysteine 156, and cysteine 140–cysteine 147. Residues 47-68 (LNLTYGLVFLLVPALALFLLGY) form a helical membrane-spanning segment. Over 69 to 103 (ALSARTWRLLTGCCSRSASTRSSSGLRSTLVCAQV) the chain is Cytoplasmic. The chain crosses the membrane as a helical span at residues 104 to 128 (SAVAALAPLTWVAVALLGGSFYQCA). Residues 129 to 169 (VSGSTRLASYLCKDRNHSCIAKLPQVPCNKQEAEMQEILSQ) are Extracellular-facing. Residues 170 to 192 (LKAQSQVLGWVLIAAVIFLLLVF) traverse the membrane as a helical segment. Residues 193-315 (KCVSRCFSPV…DAAMANTHGV (123 aa)) lie on the Cytoplasmic side of the membrane.

Belongs to the CALHM family. In terms of assembly, oligomerizes to form decameric and undecameric channels.

Its subcellular location is the cell membrane. It catalyses the reaction ATP(in) = ATP(out). Functionally, pore-forming subunit of an ATP-permeable channel. In response to pathogen-derived and proinflammatory stimuli, relocates from intracellular compartments to NK-dendritic cell and NK-macrophage immune synapses where it mediates ATP efflux and NK cell activation involved in antimicrobial and antitumor responses. May assemble to form gap junction channel-like structures with gating and ion conductance likely regulated by membrane lipids and voltage rather than by extracellular calcium levels. The sequence is that of Calcium homeostasis modulator protein 6 from Rattus norvegicus (Rat).